A 496-amino-acid polypeptide reads, in one-letter code: Probable cytosol aminopeptidase (496 aa).

2 residues coordinate Mn(2+): lysine 258 and aspartate 263. Lysine 270 is a catalytic residue. Mn(2+) contacts are provided by aspartate 281, aspartate 340, and glutamate 342. The active site involves arginine 344.

It belongs to the peptidase M17 family. Mn(2+) serves as cofactor.

It localises to the cytoplasm. The enzyme catalyses Release of an N-terminal amino acid, Xaa-|-Yaa-, in which Xaa is preferably Leu, but may be other amino acids including Pro although not Arg or Lys, and Yaa may be Pro. Amino acid amides and methyl esters are also readily hydrolyzed, but rates on arylamides are exceedingly low.. It carries out the reaction Release of an N-terminal amino acid, preferentially leucine, but not glutamic or aspartic acids.. Presumably involved in the processing and regular turnover of intracellular proteins. Catalyzes the removal of unsubstituted N-terminal amino acids from various peptides. The chain is Probable cytosol aminopeptidase from Helicobacter pylori (strain HPAG1).